Consider the following 153-residue polypeptide: Endoribonuclease YbeY (153 aa).

Residues H114, H118, and H124 each contribute to the Zn(2+) site.

Belongs to the endoribonuclease YbeY family. Requires Zn(2+) as cofactor.

It is found in the cytoplasm. Functionally, single strand-specific metallo-endoribonuclease involved in late-stage 70S ribosome quality control and in maturation of the 3' terminus of the 16S rRNA. This chain is Endoribonuclease YbeY, found in Shewanella putrefaciens (strain CN-32 / ATCC BAA-453).